Reading from the N-terminus, the 74-residue chain is Small ribosomal subunit protein uS8c (74 aa).

The protein belongs to the universal ribosomal protein uS8 family. As to quaternary structure, part of the 30S ribosomal subunit.

It localises to the plastid. It is found in the chloroplast. Its function is as follows. One of the primary rRNA binding proteins, it binds directly to 16S rRNA central domain where it helps coordinate assembly of the platform of the 30S subunit. This Oenothera ammophila (Evening primerose) protein is Small ribosomal subunit protein uS8c (rps8).